Reading from the N-terminus, the 192-residue chain is Ornithine lipid N-methyltransferase (192 aa).

Belongs to the methyltransferase superfamily.

The catalysed reaction is an N(2)-[(3R)-3-(2-saturated-acyloxy)acyl]-L-ornithine lipid + 3 S-adenosyl-L-methionine = an N,N,N-trimethylornithine lipid + 3 S-adenosyl-L-homocysteine + 3 H(+). Its function is as follows. Catalyzes the 3-fold methylation of ornithine lipids. Forms ornithine lipids that are mono-, di-, and trimethylated on the delta-nitrogen of the ornithine head group. In Singulisphaera acidiphila (strain ATCC BAA-1392 / DSM 18658 / VKM B-2454 / MOB10), this protein is Ornithine lipid N-methyltransferase.